Reading from the N-terminus, the 366-residue chain is sn-glycerol-3-phosphate import ATP-binding protein UgpC (366 aa).

One can recognise an ABC transporter domain in the interval 4 to 235 (LSLRNVQKTY…PASTFVAGFI (232 aa)). 37–44 (GPSGCGKS) lines the ATP pocket.

Belongs to the ABC transporter superfamily. sn-glycerol-3-phosphate importer (TC 3.A.1.1.3) family. As to quaternary structure, the complex is composed of two ATP-binding proteins (UgpC), two transmembrane proteins (UgpA and UgpE) and a solute-binding protein (UgpB).

It localises to the cell inner membrane. It carries out the reaction sn-glycerol 3-phosphate(out) + ATP + H2O = sn-glycerol 3-phosphate(in) + ADP + phosphate + H(+). In terms of biological role, part of the ABC transporter complex UgpBAEC involved in sn-glycerol-3-phosphate (G3P) import. Responsible for energy coupling to the transport system. This Cupriavidus necator (strain ATCC 17699 / DSM 428 / KCTC 22496 / NCIMB 10442 / H16 / Stanier 337) (Ralstonia eutropha) protein is sn-glycerol-3-phosphate import ATP-binding protein UgpC.